A 216-amino-acid chain; its full sequence is Putative holocytochrome-c1 synthase (216 aa).

The segment at 1 to 46 is disordered; it reads MQPEQLNQEEESKCPVPPEVRDAWLKSHGGKKPSEVHDTPHPTMLP.

It belongs to the cytochrome c-type heme lyase family.

Its subcellular location is the mitochondrion inner membrane. The catalysed reaction is holo-[cytochrome c] = apo-[cytochrome c] + heme b. Lyase that catalyzes the covalent linking of the heme group to the cytochrome C1 apoprotein to produce the mature functional cytochrome. The polypeptide is Putative holocytochrome-c1 synthase (Schizosaccharomyces pombe (strain 972 / ATCC 24843) (Fission yeast)).